The following is a 275-amino-acid chain: Cis-2,3-dihydrobiphenyl-2,3-diol dehydrogenase (275 aa).

An NAD(+)-binding site is contributed by L9 to V33. Position 140 (S140) interacts with substrate. The Proton acceptor role is filled by Y153.

It belongs to the short-chain dehydrogenases/reductases (SDR) family.

It carries out the reaction (2R,3S)-3-phenylcyclohexa-3,5-diene-1,2-diol + NAD(+) = biphenyl-2,3-diol + NADH + H(+). The protein operates within xenobiotic degradation; biphenyl degradation; 2-hydroxy-2,4-pentadienoate and benzoate from biphenyl: step 2/4. The protein is Cis-2,3-dihydrobiphenyl-2,3-diol dehydrogenase (bphB) of Metapseudomonas furukawaii (Pseudomonas furukawaii).